Consider the following 131-residue polypeptide: Small ribosomal subunit protein uS8 (131 aa).

The protein belongs to the universal ribosomal protein uS8 family. In terms of assembly, part of the 30S ribosomal subunit. Contacts proteins S5 and S12.

Functionally, one of the primary rRNA binding proteins, it binds directly to 16S rRNA central domain where it helps coordinate assembly of the platform of the 30S subunit. The chain is Small ribosomal subunit protein uS8 from Chlorobium chlorochromatii (strain CaD3).